Consider the following 377-residue polypeptide: Histone deacetylase 8 (377 aa).

The interval 14–324 (LVPVYIYSPE…WTYLTGVILG (311 aa)) is histone deacetylase. Ser-39 is subject to Phosphoserine. Asp-101 lines the substrate pocket. The active-site Proton acceptor is His-143. Substrate is bound at residue Gly-151. Positions 178, 180, and 267 each coordinate a divalent metal cation. Tyr-306 is a substrate binding site.

This sequence belongs to the histone deacetylase family. HD type 1 subfamily. In terms of assembly, interacts with PEPB2-MYH11, a fusion protein consisting of the 165 N-terminal residues of CBF-beta (PEPB2) with the tail region of MYH11 produced by the inversion Inv(16)(p13q22), a translocation associated with acute myeloid leukemia of M4EO subtype. The PEPB2-MYH1 fusion protein also interacts with RUNX1, a well known transcriptional regulator, suggesting that the interaction with HDAC8 may participate in the conversion of RUNX1 into a constitutive transcriptional repressor. Interacts with CBFA2T3. Interacts with phosphorylated SMG5/EST1B; this interaction protects SMG5 from ubiquitin-mediated degradation. Associates with alpha-SMA (smooth muscle alpha-actin). A divalent metal cation is required as a cofactor. Post-translationally, phosphorylated by PKA on serine 39. Phosphorylation reduces deacetylase activity observed preferentially on histones H3 and H4. Weakly expressed in most tissues. Expressed at higher level in heart, brain, kidney and pancreas and also in liver, lung, placenta, prostate and kidney.

It is found in the nucleus. Its subcellular location is the chromosome. The protein localises to the cytoplasm. The enzyme catalyses N(6)-acetyl-L-lysyl-[histone] + H2O = L-lysyl-[histone] + acetate. It carries out the reaction N(6)-acetyl-L-lysyl-[protein] + H2O = L-lysyl-[protein] + acetate. The catalysed reaction is N(6)-(2E)-butenoyl-L-lysyl-[protein] + H2O = (2E)-2-butenoate + L-lysyl-[protein]. With respect to regulation, its activity is inhibited by trichostatin A (TSA), suberoylanilide hydroxamic acid (SAHA), 3-(1-methyl-4-phenylacetyl-1H-2-pyrrolyl)-N-hydroxy-2-propenamide (APHA), 4-dimethylamino-N-(6-hydroxycarbamoyethyl)benzamide-N-hydroxy-7-(4-dimethylaminobenzoyl)aminoheptanamide (MS-344), 5-(4-methyl-benzoylamino)-biphenyl-3,4'-dicarboxylic acid 3-dimethylamide 4'-hydroxyamide (CRA-A) and butyrate. In terms of biological role, histone deacetylase that catalyzes the deacetylation of lysine residues on the N-terminal part of the core histones (H2A, H2B, H3 and H4). Histone deacetylation gives a tag for epigenetic repression and plays an important role in transcriptional regulation, cell cycle progression and developmental events. Histone deacetylases act via the formation of large multiprotein complexes. Also involved in the deacetylation of cohesin complex protein SMC3 regulating release of cohesin complexes from chromatin. May play a role in smooth muscle cell contractility. In addition to protein deacetylase activity, also has protein-lysine deacylase activity: acts as a protein decrotonylase by mediating decrotonylation ((2E)-butenoyl) of histones. The sequence is that of Histone deacetylase 8 from Homo sapiens (Human).